The primary structure comprises 507 residues: ATP synthase subunit alpha, chloroplastic (507 aa).

An ATP-binding site is contributed by 170-177 (GDRQTGKT).

It belongs to the ATPase alpha/beta chains family. In terms of assembly, F-type ATPases have 2 components, CF(1) - the catalytic core - and CF(0) - the membrane proton channel. CF(1) has five subunits: alpha(3), beta(3), gamma(1), delta(1), epsilon(1). CF(0) has four main subunits: a, b, b' and c.

It is found in the plastid. The protein resides in the chloroplast thylakoid membrane. It carries out the reaction ATP + H2O + 4 H(+)(in) = ADP + phosphate + 5 H(+)(out). In terms of biological role, produces ATP from ADP in the presence of a proton gradient across the membrane. The alpha chain is a regulatory subunit. The chain is ATP synthase subunit alpha, chloroplastic from Oryza nivara (Indian wild rice).